Here is a 564-residue protein sequence, read N- to C-terminus: Large neutral amino acids transporter small subunit 3 (564 aa).

Residues 20–40 (VVENLFFSAVLLGWASLLIML) form a helical membrane-spanning segment. Residues Asn-54 and Asn-57 are each glycosylated (N-linked (GlcNAc...) asparagine). A run of 5 helical transmembrane segments spans residues 78 to 98 (LGFT…GILM), 105 to 124 (PLRL…MALA), 131 to 151 (LSPL…CLTF), 165 to 185 (STFM…FPGI), and 191 to 211 (AGVP…LIFL). Phosphoserine is present on residues Ser-262 and Ser-267. 2 helical membrane-spanning segments follow: residues 303–323 (IFLW…FYMG) and 357–377 (SIFG…GYIM). N-linked (GlcNAc...) asparagine glycosylation is present at Asn-396. A Phosphoserine modification is found at Ser-398. Transmembrane regions (helical) follow at residues 424-444 (AINA…ACLI), 451-471 (LLAF…CGGL), 490-510 (LISA…VGPL), and 515-535 (FWVN…PSYL). The N-linked (GlcNAc...) asparagine glycan is linked to Asn-558.

This sequence belongs to the SLC43A transporter (TC 2.A.1.44) family. In terms of tissue distribution, expressed in the kidney cortex as well as liver, pancreas, and skeletal muscle. In kidney expressed in the glomerular tuft (at protein level). Expressed in liver, skeletal muscle and pancreas (at protein level).

Its subcellular location is the cell membrane. The protein resides in the apical cell membrane. It localises to the endoplasmic reticulum membrane. The enzyme catalyses D-leucine(in) = D-leucine(out). The catalysed reaction is L-leucine(in) = L-leucine(out). It carries out the reaction L-isoleucine(in) = L-isoleucine(out). It catalyses the reaction L-methionine(in) = L-methionine(out). The enzyme catalyses L-phenylalanine(in) = L-phenylalanine(out). The catalysed reaction is L-valine(in) = L-valine(out). In terms of biological role, uniport that mediates the transport of neutral amino acids such as L-leucine, L-isoleucine, L-valine, and L-phenylalanine. The transport activity is sodium ions-independent, electroneutral and mediated by a facilitated diffusion. The chain is Large neutral amino acids transporter small subunit 3 from Mus musculus (Mouse).